Reading from the N-terminus, the 447-residue chain is Oxysterols receptor LXR-alpha (447 aa).

Disordered stretches follow at residues 1-37 and 65-88; these read MSLW…GGSS and ALLT…KKGP. Residues 1–96 are transactivation AF-1; required for ligand-independent transactivation function; that stretch reads MSLWLGAPVP…GPAPKMLGNE (96 aa). Residues 24–37 are compositionally biased toward low complexity; the sequence is GAQDASSQAQGGSS. The segment at residues 95-170 is a DNA-binding region (nuclear receptor); it reads NELCSVCGDK…AGMREECVLS (76 aa). 2 NR C4-type zinc fingers span residues 98–118 and 134–158; these read CSVC…CEGC and CHSG…LRKC. The disordered stretch occupies residues 180–202; sequence KRQEEEQAHATSLPPRASSPPQI. Positions 205-447 are transactivation AF-2; required for ligand-dependent transactivation function; mediates interaction with CCAR2; sequence QLSPEQLGMI…LLSEIWDVHE (243 aa). Residues 209–447 form the NR LBD domain; it reads EQLGMIEKLV…LLSEIWDVHE (239 aa).

The protein belongs to the nuclear hormone receptor family. NR1 subfamily. As to quaternary structure, heterodimer of NR1H3 and RXR (retinoic acid receptor). Interacts with CCAR2 (via N-terminus) in a ligand-independent manner. Interacts with SIRT1 and this interaction is inhibited by CCAR2. Interacts with GPS2. In terms of processing, ubiquitinated by UBR5, leading to its degradation: UBR5 specifically recognizes and binds ligand-bound NR1H3 when it is not associated with coactivators (NCOAs). In presence of NCOAs, the UBR5-degron is not accessible, preventing its ubiquitination and degradation. Visceral organs specific expression. Strong expression was found in liver, kidney and intestine followed by spleen and to a lesser extent the adrenals.

Its subcellular location is the nucleus. It localises to the cytoplasm. In terms of biological role, nuclear receptor that exhibits a ligand-dependent transcriptional activation activity. Interaction with retinoic acid receptor (RXR) shifts RXR from its role as a silent DNA-binding partner to an active ligand-binding subunit in mediating retinoid responses through target genes defined by LXRES. LXRES are DR4-type response elements characterized by direct repeats of two similar hexanuclotide half-sites spaced by four nucleotides. Plays an important role in the regulation of cholesterol homeostasis, regulating cholesterol uptake through MYLIP-dependent ubiquitination of LDLR, VLDLR and LRP8. Interplays functionally with RORA for the regulation of genes involved in liver metabolism. Induces LPCAT3-dependent phospholipid remodeling in endoplasmic reticulum (ER) membranes of hepatocytes, driving SREBF1 processing and lipogenesis. Via LPCAT3, triggers the incorporation of arachidonate into phosphatidylcholines of ER membranes, increasing membrane dynamics and enabling triacylglycerols transfer to nascent very low-density lipoprotein (VLDL) particles. Via LPCAT3 also counteracts lipid-induced ER stress response and inflammation, likely by modulating SRC kinase membrane compartmentalization and limiting the synthesis of lipid inflammatory mediators. The polypeptide is Oxysterols receptor LXR-alpha (NR1H3) (Homo sapiens (Human)).